Consider the following 2017-residue polypeptide: Rootletin (2017 aa).

2 coiled-coil regions span residues 70–262 (ATEM…KVTN) and 318–444 (ERDL…LETE). Over residues 464 to 483 (SESGVQLSGSERTADASNGS) the composition is skewed to polar residues. The tract at residues 464–518 (SESGVQLSGSERTADASNGSLRGLSGQRTPSPPRRSSPGRGRSPRRGPSPACSDS) is disordered. Positions 499 to 513 (SSPGRGRSPRRGPSP) are enriched in low complexity. Coiled coils occupy residues 546–1058 (QDLL…LAES) and 1091–1438 (EMER…GLRS). 2 disordered regions span residues 1184-1226 (LRES…RSAV) and 1443-1575 (GLGL…GRLS). Residues S1460, S1470, S1476, S1483, S1486, S1490, and S1496 each carry the phosphoserine modification. Positions 1505 to 1704 (EAVRGALREF…DSEVKAGTLQ (200 aa)) form a coiled coil. Over residues 1510-1529 (ALREFLQELRSAQRERDELR) the composition is skewed to basic and acidic residues. 2 positions are modified to phosphoserine: S1575 and S1660. The tract at residues 1962 to 2017 (RSAQAQTERTLEARERAHRQRVRGLEEQVSTLKGQLQQELRRSSAPFSPPSGPPEK) is disordered. A compositionally biased stretch (polar residues) spans 1989–1999 (QVSTLKGQLQQ). Residues 2008–2017 (FSPPSGPPEK) are compositionally biased toward pro residues.

It belongs to the rootletin family. In terms of assembly, homomer. Interacts with KLC3, NEK2 and the N-terminus of CEP250. Interacts with CEP44. Interacts with CCDC102B (via N-terminus). In terms of processing, phosphorylated by NEK2 which may regulate its association with centrosomes.

The protein localises to the cytoplasm. Its subcellular location is the cytoskeleton. It localises to the microtubule organizing center. It is found in the centrosome. The protein resides in the centriole. The protein localises to the cilium basal body. Major structural component of the ciliary rootlet, a cytoskeletal-like structure in ciliated cells which originates from the basal body at the proximal end of a cilium and extends proximally toward the cell nucleus. Furthermore, is required for the correct positioning of the cilium basal body relative to the cell nucleus, to allow for ciliogenesis. Contributes to centrosome cohesion before mitosis. The sequence is that of Rootletin from Homo sapiens (Human).